Reading from the N-terminus, the 632-residue chain is MEGVRFVVWRLGFLVFVWFFDISSATLSPTGVNYEVTALVAVKNELNDPYKVLENWDVNSVDPCSWRMVSCTDGYVSSLDLPSQSLSGTLSPRIGNLTYLQSVVLQNNAITGPIPETIGRLEKLQSLDLSNNSFTGEIPASLGELKNLNYLRLNNNSLIGTCPESLSKIEGLTLVDISYNNLSGSLPKVSARTFKVIGNALICGPKAVSNCSAVPEPLTLPQDGPDESGTRTNGHHVALAFAASFSAAFFVFFTSGMFLWWRYRRNKQIFFDVNEQYDPEVSLGHLKRYTFKELRSATNHFNSKNILGRGGYGIVYKGHLNDGTLVAVKRLKDCNIAGGEVQFQTEVETISLALHRNLLRLRGFCSSNQERILVYPYMPNGSVASRLKDNIRGEPALDWSRRKKIAVGTARGLVYLHEQCDPKIIHRDVKAANILLDEDFEAVVGDFGLAKLLDHRDSHVTTAVRGTVGHIAPEYLSTGQSSEKTDVFGFGILLLELITGQKALDFGRSAHQKGVMLDWVKKLHQEGKLKQLIDKDLNDKFDRVELEEIVQVALLCTQFNPSHRPKMSEVMKMLEGDGLAERWEATQNGTGEHQPPPLPPGMVSSSPRVRYYSDYIQESSLVVEAIELSGPR.

The signal sequence occupies residues 1 to 25 (MEGVRFVVWRLGFLVFVWFFDISSA). Residues 26–238 (TLSPTGVNYE…GTRTNGHHVA (213 aa)) lie on the Extracellular side of the membrane. The N-linked (GlcNAc...) asparagine glycan is linked to Asn96. LRR repeat units follow at residues 97–121 (LTYL…IGRL), 122–145 (EKLQ…LGEL), 147–168 (NLNY…SLSK), and 169–193 (IEGL…SART). N-linked (GlcNAc...) asparagine glycosylation is found at Asn131, Asn155, Asn181, and Asn210. A helical transmembrane segment spans residues 239-259 (LAFAASFSAAFFVFFTSGMFL). Over 260-632 (WWRYRRNKQI…VEAIELSGPR (373 aa)) the chain is Cytoplasmic. Thr298 carries the post-translational modification Phosphothreonine. The region spanning 301-584 (FNSKNILGRG…EGDGLAERWE (284 aa)) is the Protein kinase domain. 307–315 (LGRGGYGIV) provides a ligand contact to ATP. Thr324 carries the post-translational modification Phosphothreonine. Residue Lys329 participates in ATP binding. Residues Ser382 and Ser385 each carry the phosphoserine modification. Residues 415 to 495 (YLHEQCDPKI…DVFGFGILLL (81 aa)) are interaction with geminivirus NSP protein. Catalysis depends on Asp428, which acts as the Proton acceptor. Residues Thr461, Thr462, and Thr467 each carry the phosphothreonine modification. Phosphotyrosine is present on Tyr475. Residue Ser477 is modified to Phosphoserine. The residue at position 478 (Thr478) is a Phosphothreonine. Phosphoserine is present on Ser482. Phosphothreonine is present on Thr557.

Belongs to the protein kinase superfamily. Ser/Thr protein kinase family. As to quaternary structure, oligomer. Interacts with geminivirus nuclear shuttle protein (NSP). Post-translationally, autophosphorylated. In terms of tissue distribution, expressed in seedlings, leaves and flowers.

It is found in the cell membrane. It carries out the reaction L-seryl-[protein] + ATP = O-phospho-L-seryl-[protein] + ADP + H(+). It catalyses the reaction L-threonyl-[protein] + ATP = O-phospho-L-threonyl-[protein] + ADP + H(+). Inhibited by the viral nuclear shuttle protein (NSP) that binds to the region required for oligomerization. Involved in defense response to geminivirus infection. This is Protein NSP-INTERACTING KINASE 3 (NIK3) from Arabidopsis thaliana (Mouse-ear cress).